A 291-amino-acid polypeptide reads, in one-letter code: Homeobox protein SIX2 (291 aa).

The homeobox DNA-binding region spans 124–183 (GEETSYCFKEKSRSVLREWYAHNPYPSPREKRELAEATGLTTTQVSNWFKNRRQRDRAAE). The disordered stretch occupies residues 168-279 (VSNWFKNRRQ…HHHGLQDSIL (112 aa)). Positions 179–190 (DRAAEAKERENN) are enriched in basic and acidic residues. Positions 224-233 (HSSSSPALLL) are enriched in low complexity. The span at 249-259 (PPGPSAVPVPV) shows a compositional bias: pro residues.

It belongs to the SIX/Sine oculis homeobox family. As to quaternary structure, interacts with TCF7L2; in a canonical Wnt signaling independent manner; prevents transcription of differentiation genes in cap mesenchyme. Interacts with OSR1; form a strong repressor complex with TCF7L2, TLE2 and TLE3 to prevent the activation of Wnt/beta-catenin target genes in the cap mesenchyme. Interacts with HOXA11, EYA1 and EYA3. Strongly expressed in skeletal muscle. Expressed in Wilms' tumor and in the cap mesenchyme of fetal kidney (at protein level).

Its subcellular location is the nucleus. Functionally, transcription factor that plays an important role in the development of several organs, including kidney, skull and stomach. During kidney development, maintains cap mesenchyme multipotent nephron progenitor cells in an undifferentiated state by opposing the inductive signals emanating from the ureteric bud and cooperates with WNT9B to promote renewing progenitor cells proliferation. Acts through its interaction with TCF7L2 and OSR1 in a canonical Wnt signaling independent manner preventing transcription of differentiation genes in cap mesenchyme such as WNT4. Also acts independently of OSR1 to activate expression of many cap mesenchyme genes, including itself, GDNF and OSR1. During craniofacial development plays a role in growth and elongation of the cranial base through regulation of chondrocyte differentiation. During stomach organogenesis, controls pyloric sphincter formation and mucosal growth through regulation of a gene network including NKX2-5, BMPR1B, BMP4, SOX9 and GREM1. During branchial arch development, acts to mediate HOXA2 control over the insulin-like growth factor pathway. May also be involved in limb tendon and ligament development. Plays a role in cell proliferation and migration. In Homo sapiens (Human), this protein is Homeobox protein SIX2 (SIX2).